Reading from the N-terminus, the 285-residue chain is Protease HtpX homolog (285 aa).

A run of 2 helical transmembrane segments spans residues 7-27 (TAML…MIGG) and 30-50 (GMTI…WFSD). His-131 lines the Zn(2+) pocket. The active site involves Glu-132. Residue His-135 participates in Zn(2+) binding. 2 helical membrane passes run 146–166 (ITAT…FFGG) and 177–197 (IAGI…QMAI). Glu-202 provides a ligand contact to Zn(2+).

The protein belongs to the peptidase M48B family. Requires Zn(2+) as cofactor.

It localises to the cell inner membrane. The sequence is that of Protease HtpX homolog from Burkholderia ambifaria (strain MC40-6).